Consider the following 149-residue polypeptide: Lipoprotein signal peptidase (149 aa).

3 helical membrane-spanning segments follow: residues 24–44, 57–77, and 81–101; these read SHIA…LTNL, KMWF…YLLW, and GKWL…GNFI. Residues D111 and D127 contribute to the active site. Residues 122–142 form a helical membrane-spanning segment; the sequence is IFNFADSCLTVGVIFILIGVL.

This sequence belongs to the peptidase A8 family.

It localises to the cell membrane. It carries out the reaction Release of signal peptides from bacterial membrane prolipoproteins. Hydrolyzes -Xaa-Yaa-Zaa-|-(S,diacylglyceryl)Cys-, in which Xaa is hydrophobic (preferably Leu), and Yaa (Ala or Ser) and Zaa (Gly or Ala) have small, neutral side chains.. It functions in the pathway protein modification; lipoprotein biosynthesis (signal peptide cleavage). This protein specifically catalyzes the removal of signal peptides from prolipoproteins. In Lactiplantibacillus plantarum (strain ATCC BAA-793 / NCIMB 8826 / WCFS1) (Lactobacillus plantarum), this protein is Lipoprotein signal peptidase.